Reading from the N-terminus, the 78-residue chain is Defensin SD2 (78 aa).

An N-terminal signal peptide occupies residues 1–20 (MKSSMKMFAALLLVVMCLLA). Disulfide bonds link cysteine 34-cysteine 78, cysteine 45-cysteine 65, cysteine 51-cysteine 72, and cysteine 55-cysteine 74.

This sequence belongs to the DEFL family. As to expression, highest expression in flowers and to a lesser extent in leaves. Lower levels in hypocotyls. No expression in roots and cotyledons.

It is found in the secreted. The protein resides in the cell wall. May play a protective role in flowers by protecting the reproductive organs from potential pathogen attack. The sequence is that of Defensin SD2 (SD2) from Helianthus annuus (Common sunflower).